The chain runs to 77 residues: U11-lycotoxin-Ls1a (77 aa).

The signal sequence occupies residues 1–20 (MKLIILTGLVLFAIVSLIEA). The propeptide occupies 21-26 (EEESGR).

It belongs to the neurotoxin 19 (CSTX) family. 10 (U11-Lctx) subfamily. Contains 4 disulfide bonds. In terms of tissue distribution, expressed by the venom gland.

Its subcellular location is the secreted. The protein is U11-lycotoxin-Ls1a of Lycosa singoriensis (Wolf spider).